Here is an 85-residue protein sequence, read N- to C-terminus: UPF0297 protein Cbei_1105 (85 aa).

Belongs to the UPF0297 family.

This is UPF0297 protein Cbei_1105 from Clostridium beijerinckii (strain ATCC 51743 / NCIMB 8052) (Clostridium acetobutylicum).